The following is a 491-amino-acid chain: UDP-glycosyltransferase 73C1 (491 aa).

Residues serine 292, 352-354, 369-377, and 391-394 each bind UDP-alpha-D-glucose; these read SPQ, HCGWNSTLE, and FGDQ.

This sequence belongs to the UDP-glycosyltransferase family.

Involved in the O-glucosylation of trans-zeatin and dihydrozeatin. Also active in vitro on cis-zeatin, dihydrozeatin-9-N-Glc, and olomoucine. Can detoxify the explosive 2,4,6-trinitrotoluene in plant by forming O- or C-glucose conjugates. The protein is UDP-glycosyltransferase 73C1 (UGT73C1) of Arabidopsis thaliana (Mouse-ear cress).